The primary structure comprises 1193 residues: uncharacterized protein (1193 aa).

The signal sequence occupies residues 1–25; the sequence is MKIKFINYLLLFFIIFLNYNGFVKS. Topologically, residues 26–1172 are extracellular; sequence DCYQELDLVL…PQDPSDELST (1147 aa). N-linked (GlcNAc...) asparagine glycosylation is found at Asn90, Asn183, Asn226, Asn265, Asn281, Asn345, Asn357, Asn436, Asn516, Asn552, Asn583, Asn627, Asn712, Asn765, Asn822, Asn938, Asn1038, and Asn1092. Residues 1173-1193 traverse the membrane as a helical segment; it reads SSFVQVNLLFLSILIFTIFIF.

The protein resides in the membrane. This is an uncharacterized protein from Dictyostelium discoideum (Social amoeba).